The sequence spans 724 residues: MAPTADVLPPVEASTRPGLLVQPSDTKLRKASSFRTEQVVIDGYNLKIQGLVASARYGHVPVLDPSAETRKRIDDSVQSLIAKLDRGESIYGINTGFGGSADSRTANTRALQLALLQMQQCGVLPVPSTFPTGEPSSAPFALPLTDTESSLIMPEAWVRGAIVVRLSSLMRGHSGVRWEVLDKMQKLFLQNNVTPVVPVRSSISASGDLSPLSYVAGALAGQRGIYCFVTDGRGQRVKVTADEACRMHKITPVQYEPKEALGLLNGTAFSASVAGLATYEAENLASLTQLTTAMAVEALKGTDASFAPFIHEIARPHPGQIKSAKFIRALLSGSRLAEHLENEKHVLFSEDNGTLRQDRYTLRTASQWVGPGLEDIENAKRSVDIEINSTTDNPMIDPYDGDGRIHHGGNFQAMAMTNAVEKIRLALCAMGKMTFQQMTELVNPAMNRGLPANLASTPDLSLNFHAKGIDIALASVTSELMFLGNPVSTHVQSAEMANQAINSLALISGRQTLQAIECLSMIQAWSLYLLCQALDIRALQYKVAEQLPTLILASLHSHFGEWMDETKQQEIAAQVLKSMSKRLDETSSKDLRDRLVETYQDASSVLVRYFSELPSGGGADPLRNIVKWRATGVADTEKIYRQVTIEFLDNPYACHASHLLGKTKRAYEFVRKTLGVPMHGKENLNEFKGEFEQWNTTGGYVSVIYASIRDGELYNMLSELERDL.

The active-site Proton donor/acceptor is tyrosine 91. The segment at residues 205 to 207 (ASG) is a cross-link (5-imidazolinone (Ala-Gly)). Serine 206 bears the 2,3-didehydroalanine (Ser) mark. (E)-cinnamate contacts are provided by asparagine 265, glutamine 357, arginine 363, asparagine 393, lysine 467, glutamate 495, and asparagine 498.

Belongs to the PAL/histidase family. Homotetramer. In terms of processing, contains an active site 4-methylidene-imidazol-5-one (MIO), which is formed autocatalytically by cyclization and dehydration of residues Ala-Ser-Gly.

It is found in the cytoplasm. The catalysed reaction is L-phenylalanine = (E)-cinnamate + NH4(+). The protein operates within phenylpropanoid metabolism; trans-cinnamate biosynthesis; trans-cinnamate from L-phenylalanine: step 1/1. In terms of biological role, catalyzes the non-oxidative deamination of L-phenylalanine to form trans-cinnamic acid and a free ammonium ion. Facilitates the commitment step in phenylpropanoid pathways that produce secondary metabolites such as lignins, coumarins and flavonoids. This Mycosarcoma maydis (Corn smut fungus) protein is Phenylalanine ammonia-lyase (PAL1).